The primary structure comprises 311 residues: DNA-directed RNA polymerase subunit alpha (311 aa).

The alpha N-terminal domain (alpha-NTD) stretch occupies residues Met1–Asp227. An alpha C-terminal domain (alpha-CTD) region spans residues Ile242–Asp311.

The protein belongs to the RNA polymerase alpha chain family. In terms of assembly, in plastids the minimal PEP RNA polymerase catalytic core is composed of four subunits: alpha, beta, beta', and beta''. When a (nuclear-encoded) sigma factor is associated with the core the holoenzyme is formed, which can initiate transcription.

It localises to the plastid. The protein localises to the chloroplast. It carries out the reaction RNA(n) + a ribonucleoside 5'-triphosphate = RNA(n+1) + diphosphate. Functionally, DNA-dependent RNA polymerase catalyzes the transcription of DNA into RNA using the four ribonucleoside triphosphates as substrates. The protein is DNA-directed RNA polymerase subunit alpha of Porphyra purpurea (Red seaweed).